The following is a 260-amino-acid chain: UPF0246 protein Bcen2424_2223 (260 aa).

The protein belongs to the UPF0246 family.

The polypeptide is UPF0246 protein Bcen2424_2223 (Burkholderia cenocepacia (strain HI2424)).